The sequence spans 292 residues: Malonyl-[acyl-carrier protein] O-methyltransferase (292 aa).

Belongs to the methyltransferase superfamily.

The enzyme catalyses malonyl-[ACP] + S-adenosyl-L-methionine = malonyl-[ACP] methyl ester + S-adenosyl-L-homocysteine. It functions in the pathway cofactor biosynthesis; biotin biosynthesis. Functionally, converts the free carboxyl group of a malonyl-thioester to its methyl ester by transfer of a methyl group from S-adenosyl-L-methionine (SAM). It allows to synthesize pimeloyl-ACP via the fatty acid synthetic pathway. The polypeptide is Malonyl-[acyl-carrier protein] O-methyltransferase (Alcanivorax borkumensis (strain ATCC 700651 / DSM 11573 / NCIMB 13689 / SK2)).